Consider the following 1323-residue polypeptide: DNA-directed RNA polymerase subunit beta' (1323 aa).

Zn(2+) is bound by residues C60, C62, C75, and C78. Residues D535, D537, and D539 each coordinate Mg(2+). Positions 894, 977, 984, and 987 each coordinate Zn(2+).

Belongs to the RNA polymerase beta' chain family. As to quaternary structure, the RNAP catalytic core consists of 2 alpha, 1 beta, 1 beta' and 1 omega subunit. When a sigma factor is associated with the core the holoenzyme is formed, which can initiate transcription. The cofactor is Mg(2+). Requires Zn(2+) as cofactor.

It catalyses the reaction RNA(n) + a ribonucleoside 5'-triphosphate = RNA(n+1) + diphosphate. In terms of biological role, DNA-dependent RNA polymerase catalyzes the transcription of DNA into RNA using the four ribonucleoside triphosphates as substrates. This Corynebacterium jeikeium (strain K411) protein is DNA-directed RNA polymerase subunit beta'.